The sequence spans 104 residues: MYAIIEASGKQYKVEEGITLFTEKLKDFAEGDQVVFDRVLLLKDDSGVKVGKPYLENVKIVGKVVRHGRGKKIRVVKFRPRKNYHRVKGHKQWFSEVLIEKIEY.

It belongs to the bacterial ribosomal protein bL21 family. In terms of assembly, part of the 50S ribosomal subunit. Contacts protein L20.

This protein binds to 23S rRNA in the presence of protein L20. The polypeptide is Large ribosomal subunit protein bL21 (Kosmotoga olearia (strain ATCC BAA-1733 / DSM 21960 / TBF 19.5.1)).